The following is a 398-amino-acid chain: Dual-specificity RNA methyltransferase RlmN (398 aa).

E119 serves as the catalytic Proton acceptor. The 240-residue stretch at 125–364 folds into the Radical SAM core domain; sequence EADRATLCVS…TIVRKTRGDD (240 aa). An intrachain disulfide couples C132 to C369. The [4Fe-4S] cluster site is built by C139, C143, and C146. S-adenosyl-L-methionine is bound by residues 193 to 194, S225, 247 to 249, and N326; these read GE and SLH. C369 serves as the catalytic S-methylcysteine intermediate.

This sequence belongs to the radical SAM superfamily. RlmN family. [4Fe-4S] cluster is required as a cofactor.

The protein localises to the cytoplasm. It carries out the reaction adenosine(2503) in 23S rRNA + 2 reduced [2Fe-2S]-[ferredoxin] + 2 S-adenosyl-L-methionine = 2-methyladenosine(2503) in 23S rRNA + 5'-deoxyadenosine + L-methionine + 2 oxidized [2Fe-2S]-[ferredoxin] + S-adenosyl-L-homocysteine. The catalysed reaction is adenosine(37) in tRNA + 2 reduced [2Fe-2S]-[ferredoxin] + 2 S-adenosyl-L-methionine = 2-methyladenosine(37) in tRNA + 5'-deoxyadenosine + L-methionine + 2 oxidized [2Fe-2S]-[ferredoxin] + S-adenosyl-L-homocysteine. In terms of biological role, specifically methylates position 2 of adenine 2503 in 23S rRNA and position 2 of adenine 37 in tRNAs. m2A2503 modification seems to play a crucial role in the proofreading step occurring at the peptidyl transferase center and thus would serve to optimize ribosomal fidelity. The protein is Dual-specificity RNA methyltransferase RlmN of Yersinia pseudotuberculosis serotype O:3 (strain YPIII).